A 380-amino-acid chain; its full sequence is MKEYVLLLFLALCSAKPFFSPSHIALKNMMLKDMEDTDDDDDDDDDDDDDDEDNSLFPTREPRSHFFPFDLFPMCPFGCQCYSRVVHCSDLGLTSVPTNIPFDTRMLDLQNNKIKEIKENDFKGLTSLYGLILNNNKLTKIHPKAFLTTKKLRRLYLSHNQLSEIPLNLPKSLAELRIHENKVKKIQKDTFKGMNALHVLEMSANPLDNNGIEPGAFEGVTVFHIRIAEAKLTSVPKGLPPTLLELHLDYNKISTVELEDFKRYKELQRLGLGNNKITDIENGSLANIPRVREIHLENNKLKKIPSGLPELKYLQIIFLHSNSIARVGVNDFCPTVPKMKKSLYSAISLFNNPVKYWEMQPATFRCVLSRMSVQLGNFGM.

The signal sequence occupies residues 1 to 14 (MKEYVLLLFLALCS). Positions 15-32 (AKPFFSPSHIALKNMMLK) are excised as a propeptide. The segment covering 35–54 (EDTDDDDDDDDDDDDDDEDN) has biased composition (acidic residues). The tract at residues 35–59 (EDTDDDDDDDDDDDDDDEDNSLFPT) is disordered. Ser55 is a glycosylation site (O-linked (GalNAc...) serine). In terms of domain architecture, LRRNT spans 66–102 (FFPFDLFPMCPFGCQCYSRVVHCSDLGLTSVPTNIPF). 2 disulfide bridges follow: Cys75–Cys81 and Cys79–Cys88. 11 LRR repeats span residues 103–124 (DTRMLDLQNNKIKEIKENDFKG), 127–148 (SLYGLILNNNKLTKIHPKAFLT), 151–173 (KLRRLYLSHNQLSEIPLNLPKSL), 174–193 (AELRIHENKVKKIQKDTFKG), 196–219 (ALHVLEMSANPLDNNGIEPGAFEG), 242–263 (TLLELHLDYNKISTVELEDFKR), 266–287 (ELQRLGLGNNKITDIENGSLAN), 290–312 (RVREIHLENNKLKKIPSGLPELK), 313–334 (YLQIIFLHSNSIARVGVNDFCP), 335–357 (TVPKMKKSLYSAISLFNNPVKYW), and 358–380 (EMQPATFRCVLSRMSVQLGNFGM). Residues 166–212 (PLNLPKSLAELRIHENKVKKIQKDTFKGMNALHVLEMSANPLDNNGI) form an interaction with TGFB1 region. An N-linked (GlcNAc...) asparagine glycan is attached at Asn282. Cys333 and Cys366 are oxidised to a cystine.

This sequence belongs to the small leucine-rich proteoglycan (SLRP) family. SLRP class I subfamily. In terms of assembly, interacts with TGFB1, TGFB2 and TGFB3. DCN, BGN, and FMOD inhibit binding to TGFB1. Interacts with BMP2. Interacts in vitro with type II collagen. Interacts with type I collagen. DCN can inhibit collagen binding. Post-translationally, there is no serine/glycine dipeptide sequence expected for the attachment of O-linked glycosaminoglycans and this is probably not a proteoglycan. The O-linked polysaccharide on 54-Ser is probably the mucin type linked to GalNAc. The N-linked glycan at Asn-282 is composed of variable structures of GlcNAc, mannose, fucose, HexNAc and hexose. In terms of tissue distribution, higher levels in osteoarthritic articular cartilage, aorta, uterus. Moderate expression in small intestine, heart, liver, bladder, ovary, stomach, and in the adrenal, thyroid, and mammary glands. Low expression in trachea, bone marrow, and lung. Colocalizes with TGFB1 in chondrocytes within osteoarthritic (OA) lesions of articular cartilage.

It localises to the secreted. Its subcellular location is the extracellular space. It is found in the extracellular matrix. Its function is as follows. Negatively regulates periodontal ligament (PDL) differentiation and mineralization to ensure that the PDL is not ossified and to maintain homeostasis of the tooth-supporting system. Inhibits BMP2-induced cytodifferentiation of PDL cells by preventing its binding to BMPR1B/BMP type-1B receptor, resulting in inhibition of BMP-dependent activation of SMAD proteins. Critical regulator of TGF-beta in articular cartilage and plays an essential role in cartilage homeostasis and osteoarthritis (OA) pathogenesis. Negatively regulates chondrogenesis in the articular cartilage by blocking the TGF-beta/receptor interaction on the cell surface and inhibiting the canonical TGF-beta/Smad signal. Binds calcium and plays a role in osteoblast-driven collagen biomineralization activity. The protein is Asporin (ASPN) of Homo sapiens (Human).